A 260-amino-acid chain; its full sequence is 4-hydroxy-tetrahydrodipicolinate reductase (260 aa).

NAD(+) contacts are provided by residues 12 to 17 (GFRGKM), 92 to 94 (GTT), and 118 to 121 (APNF). H148 serves as the catalytic Proton donor/acceptor. H149 is a binding site for (S)-2,3,4,5-tetrahydrodipicolinate. K152 acts as the Proton donor in catalysis. A (S)-2,3,4,5-tetrahydrodipicolinate-binding site is contributed by 158–159 (GT).

It belongs to the DapB family.

The protein localises to the cytoplasm. It carries out the reaction (S)-2,3,4,5-tetrahydrodipicolinate + NAD(+) + H2O = (2S,4S)-4-hydroxy-2,3,4,5-tetrahydrodipicolinate + NADH + H(+). It catalyses the reaction (S)-2,3,4,5-tetrahydrodipicolinate + NADP(+) + H2O = (2S,4S)-4-hydroxy-2,3,4,5-tetrahydrodipicolinate + NADPH + H(+). It functions in the pathway amino-acid biosynthesis; L-lysine biosynthesis via DAP pathway; (S)-tetrahydrodipicolinate from L-aspartate: step 4/4. Its function is as follows. Catalyzes the conversion of 4-hydroxy-tetrahydrodipicolinate (HTPA) to tetrahydrodipicolinate. The chain is 4-hydroxy-tetrahydrodipicolinate reductase from Lactococcus lactis subsp. cremoris (strain MG1363).